The following is an 827-amino-acid chain: Copper-transporting ATPase 2 (827 aa).

HMA domains are found at residues 15–80 (VSTN…YAPR) and 82–148 (ATEE…YELR). 4 residues coordinate Cu cation: cysteine 26, cysteine 29, cysteine 93, and cysteine 96. A run of 6 helical transmembrane segments spans residues 174 to 194 (VTISVLMTLPLFLMEMGSHFI), 210 to 230 (NLYLQFALATLVLFGPGLRFF), 246 to 266 (SLVVLGTTAAWGYSVVATFVP), 271 to 291 (SGTANVYYEAAAVIVTLVLLG), 430 to 450 (GWFVPAVILAAVLTFAAWYTF), and 458 to 478 (FALVNAVAVLIIACPCAMGLA). Catalysis depends on aspartate 515, which acts as the 4-aspartylphosphate intermediate. Mg(2+)-binding residues include aspartate 714 and aspartate 718. Transmembrane regions (helical) follow at residues 771-793 (NLFWAFAYNVSLIPVAAGVLYPV) and 797-819 (LLSPIFAAAAMAMSSVFVLGNAL).

Belongs to the cation transport ATPase (P-type) (TC 3.A.3) family. Type IB subfamily.

The protein localises to the cell membrane. It catalyses the reaction Cu(2+)(in) + ATP + H2O = Cu(2+)(out) + ADP + phosphate + H(+). In terms of biological role, involved in copper transport. This is Copper-transporting ATPase 2 (actP2) from Rhizobium meliloti (strain 1021) (Ensifer meliloti).